Reading from the N-terminus, the 81-residue chain is UPF0410 protein YwzA (81 aa).

Helical transmembrane passes span 1 to 21 (MSFL…SLFV), 27 to 47 (GGII…HGLL), and 56 to 76 (GFAI…VSLL).

It belongs to the UPF0410 family.

The protein localises to the cell membrane. This chain is UPF0410 protein YwzA (ywzA), found in Bacillus subtilis (strain 168).